The following is a 42-amino-acid chain: Photosystem I reaction center subunit IX (42 aa).

Residues 7 to 27 (YLSTAPVLAAVWFGFLAGLLI) form a helical membrane-spanning segment.

It belongs to the PsaJ family.

Its subcellular location is the plastid. The protein resides in the chloroplast thylakoid membrane. Functionally, may help in the organization of the PsaE and PsaF subunits. This is Photosystem I reaction center subunit IX from Nephroselmis olivacea (Green alga).